The sequence spans 185 residues: Potassium-transporting ATPase KdpC subunit (185 aa).

A helical transmembrane segment spans residues 14 to 34 (ALSLLTGVAYPLALTGIAAVI). A disordered region spans residues 105-128 (AQNGAPAPVDAVTASGSGLDPHVS).

It belongs to the KdpC family. As to quaternary structure, the system is composed of three essential subunits: KdpA, KdpB and KdpC.

The protein resides in the cell inner membrane. Functionally, part of the high-affinity ATP-driven potassium transport (or Kdp) system, which catalyzes the hydrolysis of ATP coupled with the electrogenic transport of potassium into the cytoplasm. This subunit acts as a catalytic chaperone that increases the ATP-binding affinity of the ATP-hydrolyzing subunit KdpB by the formation of a transient KdpB/KdpC/ATP ternary complex. This chain is Potassium-transporting ATPase KdpC subunit, found in Cereibacter sphaeroides (strain ATCC 17029 / ATH 2.4.9) (Rhodobacter sphaeroides).